A 246-amino-acid polypeptide reads, in one-letter code: E3 ubiquitin-protein ligase MARCHF2 (246 aa).

The RING-CH-type zinc finger occupies 56-116 (GTQSDGPICR…ELCHTEFAVE (61 aa)). Positions 64, 67, 80, 82, 90, 93, 106, and 109 each coordinate Zn(2+). 2 consecutive transmembrane segments (helical) span residues 138-158 (LFCDMVCFLFITPLAAISGWL) and 175-195 (AVGLIALTIALFTIYVLWTLV).

The protein resides in the endoplasmic reticulum membrane. It is found in the lysosome membrane. The protein localises to the endosome membrane. The enzyme catalyses S-ubiquitinyl-[E2 ubiquitin-conjugating enzyme]-L-cysteine + [acceptor protein]-L-lysine = [E2 ubiquitin-conjugating enzyme]-L-cysteine + N(6)-ubiquitinyl-[acceptor protein]-L-lysine.. It functions in the pathway protein modification; protein ubiquitination. Functionally, E3 ubiquitin-protein ligase which may be involved in endosomal trafficking. E3 ubiquitin ligases accept ubiquitin from an E2 ubiquitin-conjugating enzyme in the form of a thioester and then directly transfer the ubiquitin to targeted substrates. This chain is E3 ubiquitin-protein ligase MARCHF2 (marchf2), found in Xenopus laevis (African clawed frog).